A 298-amino-acid chain; its full sequence is MQDFSSLLLKLQEYWKNQGCLVIQPYDIPAGAGTFHPATLLRSLDKKPWNVAYVAPSRRPTDGRYGENPNRLGSYYQFQVVIKPSPSNIQELYLKSLEVLGINLNEHDIRFVEDNWESPTLGAWGLGWEVWLDGMEVTQFTYFQQVGGISCNPIPVEITYGLERLAMYVQKVENILEIEWAKKDNESVRYAQVHLESEYEFSKYHFEVASVKRLLEMFKNAQTEALHCLENKLPLPAYDWVVLCSHFFNILDARKAISVAERQNYILQIRDLAKGCAILYKGQEEEREERLKNALSKA.

It belongs to the class-II aminoacyl-tRNA synthetase family. Tetramer of two alpha and two beta subunits.

The protein localises to the cytoplasm. It carries out the reaction tRNA(Gly) + glycine + ATP = glycyl-tRNA(Gly) + AMP + diphosphate. This Helicobacter acinonychis (strain Sheeba) protein is Glycine--tRNA ligase alpha subunit.